We begin with the raw amino-acid sequence, 261 residues long: uncharacterized protein (261 aa).

E46 is a catalytic residue.

This sequence belongs to the PhzF family.

This is an uncharacterized protein from Pseudomonas aeruginosa (strain ATCC 15692 / DSM 22644 / CIP 104116 / JCM 14847 / LMG 12228 / 1C / PRS 101 / PAO1).